We begin with the raw amino-acid sequence, 598 residues long: MFS siderochrome iron transporter D (598 aa).

Positions 1–34 are disordered; the sequence is MLSSWQKKFFQTPEHPPAEGIAPPRDDGVPNPEP. Residues 1-76 lie on the Cytoplasmic side of the membrane; sequence MLSSWQKKFF…AEAITLTWSK (76 aa). The chain crosses the membrane as a helical span at residues 77–97; the sequence is ISLGAAYFLMWLLYLVNGFQA. The Extracellular portion of the chain corresponds to 98–115; sequence SITGNLSAYVTSGFESHS. A glycan (N-linked (GlcNAc...) asparagine) is linked at N102. A helical membrane pass occupies residues 116 to 136; the sequence is LIPVISIVSSVMSAATYMPLA. Residues 137-144 are Cytoplasmic-facing; that stretch reads KVLNLWDR. A helical transmembrane segment spans residues 145–165; it reads SIGFIIMVAFATLGLILSATC. The Extracellular segment spans residues 166 to 171; it reads HDIGTY. Residues 172–192 form a helical membrane-spanning segment; sequence CAAQVFYSIGFAGIIFSVDVI. Over 193-203 the chain is Cytoplasmic; the sequence is TADTSTLRDRG. Residues 204–224 form a helical membrane-spanning segment; the sequence is LAYAFTSSPYIITAFGGPAAA. The Extracellular segment spans residues 225-233; sequence EHFYDSNWR. The chain crosses the membrane as a helical span at residues 234 to 254; the sequence is WAYGCFSIVLPVVALPMFCLL. Residues 255 to 289 are Cytoplasmic-facing; sequence RWNRHKAKKSGLLKDKADSGRTWMESIRHYIIEFD. The chain crosses the membrane as a helical span at residues 290 to 310; that stretch reads ILGVFFLAAGLVLFLLPFSIA. The Extracellular portion of the chain corresponds to 311–318; it reads GSTEDDWK. Residues 319 to 339 form a helical membrane-spanning segment; that stretch reads SASIITMLVIGFVCLLVFALV. Over 340–341 the chain is Cytoplasmic; it reads ER. The helical transmembrane segment at 342–362 threads the bilayer; the sequence is FVAPVPFLPWALLASRTVLGA. Residues 363–396 are Extracellular-facing; the sequence is CMLDVCYQIAYYCWFNYYTSYLQVVYGTSITTAG. A helical transmembrane segment spans residues 397-417; it reads YITSIFDVVSGVWLFIVGFLI. At 418–424 the chain is on the cytoplasmic side; sequence KKTNRFR. The helical transmembrane segment at 425–445 threads the bilayer; the sequence is WLLFIAVPLYILGVGLMIYFR. At 446 to 450 the chain is on the extracellular side; it reads KPSWS. The helical transmembrane segment at 451–471 threads the bilayer; the sequence is VGYMIMCQIFIAFAGGTMIIC. Topologically, residues 472 to 490 are cytoplasmic; that stretch reads QQVAVLAASDHDHAASSLA. A helical membrane pass occupies residues 491 to 511; the sequence is FLNVFGTMGSAVGSSISGAIW. At 512 to 562 the chain is on the extracellular side; it reads THTLPGALQRLLPDSVKADWQTIYDSLEEQLSYERGTLIRQAIALAYASTQ. Residues 563-583 traverse the membrane as a helical segment; sequence SKMLIAGTAIMALSLVWMFVI. The Cytoplasmic segment spans residues 584 to 598; sequence RDIKLTKTQTKGVLF.

Belongs to the major facilitator superfamily.

It localises to the cell membrane. Its function is as follows. Major facilitator transporter involved in fusarinine C (FsC) uptake. In contrast to TAFC-mediated iron uptake, FsC-mediated iron uptake via mirD does not play a significant role during infection. This Aspergillus fumigatus (strain ATCC MYA-4609 / CBS 101355 / FGSC A1100 / Af293) (Neosartorya fumigata) protein is MFS siderochrome iron transporter D.